The sequence spans 412 residues: Flap endonuclease 1-B (412 aa).

Residues M1 to R105 form an N-domain region. D34 is a binding site for Mg(2+). DNA is bound at residue R71. Mg(2+) is bound by residues D87, E159, E161, D180, and D182. An I-domain region spans residues L123–H254. A DNA-binding site is contributed by E159. Residues G232 and D234 each contribute to the DNA site. Residue D234 coordinates Mg(2+).

This sequence belongs to the XPG/RAD2 endonuclease family. FEN1 subfamily. As to quaternary structure, interacts with PCNA. Three molecules of FEN1 bind to one PCNA trimer with each molecule binding to one PCNA monomer. PCNA stimulates the nuclease activity without altering cleavage specificity. Mg(2+) is required as a cofactor. In terms of processing, phosphorylated. Phosphorylation upon DNA damage induces relocalization to the nuclear plasma.

Its subcellular location is the nucleus. It is found in the nucleolus. The protein localises to the nucleoplasm. The protein resides in the mitochondrion. In terms of biological role, structure-specific nuclease with 5'-flap endonuclease and 5'-3' exonuclease activities involved in DNA replication and repair. During DNA replication, cleaves the 5'-overhanging flap structure that is generated by displacement synthesis when DNA polymerase encounters the 5'-end of a downstream Okazaki fragment. It enters the flap from the 5'-end and then tracks to cleave the flap base, leaving a nick for ligation. Also involved in the long patch base excision repair (LP-BER) pathway, by cleaving within the apurinic/apyrimidinic (AP) site-terminated flap. Acts as a genome stabilization factor that prevents flaps from equilibrating into structures that lead to duplications and deletions. Also possesses 5'-3' exonuclease activity on nicked or gapped double-stranded DNA, and exhibits RNase H activity. Also involved in replication and repair of rDNA and in repairing mitochondrial DNA. This chain is Flap endonuclease 1-B, found in Oryza sativa subsp. indica (Rice).